Reading from the N-terminus, the 614-residue chain is DNA mismatch repair protein MutL (614 aa).

It belongs to the DNA mismatch repair MutL/HexB family.

Functionally, this protein is involved in the repair of mismatches in DNA. It is required for dam-dependent methyl-directed DNA mismatch repair. May act as a 'molecular matchmaker', a protein that promotes the formation of a stable complex between two or more DNA-binding proteins in an ATP-dependent manner without itself being part of a final effector complex. The chain is DNA mismatch repair protein MutL from Chlorobium phaeovibrioides (strain DSM 265 / 1930) (Prosthecochloris vibrioformis (strain DSM 265)).